Here is a 316-residue protein sequence, read N- to C-terminus: Aspartate carbamoyltransferase catalytic subunit (316 aa).

Carbamoyl phosphate contacts are provided by Arg56 and Thr57. An L-aspartate-binding site is contributed by Lys84. Arg106, His139, and Gln142 together coordinate carbamoyl phosphate. 2 residues coordinate L-aspartate: Arg172 and Arg226. The carbamoyl phosphate site is built by Gly267 and Pro268.

Belongs to the aspartate/ornithine carbamoyltransferase superfamily. ATCase family. Heterododecamer (2C3:3R2) of six catalytic PyrB chains organized as two trimers (C3), and six regulatory PyrI chains organized as three dimers (R2).

The catalysed reaction is carbamoyl phosphate + L-aspartate = N-carbamoyl-L-aspartate + phosphate + H(+). It functions in the pathway pyrimidine metabolism; UMP biosynthesis via de novo pathway; (S)-dihydroorotate from bicarbonate: step 2/3. Catalyzes the condensation of carbamoyl phosphate and aspartate to form carbamoyl aspartate and inorganic phosphate, the committed step in the de novo pyrimidine nucleotide biosynthesis pathway. In Mycobacterium sp. (strain JLS), this protein is Aspartate carbamoyltransferase catalytic subunit.